The sequence spans 198 residues: tRNA (pseudouridine(54)-N(1))-methyltransferase (198 aa).

Residues Leu-130, Gly-153, 176-181 (LSPLEL), and Cys-186 each bind S-adenosyl-L-methionine.

Belongs to the methyltransferase superfamily. TrmY family. In terms of assembly, homodimer.

Its subcellular location is the cytoplasm. The enzyme catalyses pseudouridine(54) in tRNA + S-adenosyl-L-methionine = N(1)-methylpseudouridine(54) in tRNA + S-adenosyl-L-homocysteine + H(+). Its function is as follows. Specifically catalyzes the N1-methylation of pseudouridine at position 54 (Psi54) in tRNAs. This chain is tRNA (pseudouridine(54)-N(1))-methyltransferase, found in Methanococcus maripaludis (strain C7 / ATCC BAA-1331).